We begin with the raw amino-acid sequence, 1249 residues long: DNA-directed RNA polymerase subunit beta (1249 aa).

This sequence belongs to the RNA polymerase beta chain family. As to quaternary structure, the RNAP catalytic core consists of 2 alpha, 1 beta, 1 beta' and 1 omega subunit. When a sigma factor is associated with the core the holoenzyme is formed, which can initiate transcription.

It carries out the reaction RNA(n) + a ribonucleoside 5'-triphosphate = RNA(n+1) + diphosphate. Functionally, DNA-dependent RNA polymerase catalyzes the transcription of DNA into RNA using the four ribonucleoside triphosphates as substrates. This chain is DNA-directed RNA polymerase subunit beta, found in Clostridium botulinum (strain Eklund 17B / Type B).